A 998-amino-acid polypeptide reads, in one-letter code: MAQVAMSTLPVEDEESSESRMVVTFLMSALESMCKELAKSKAEVACIAVYETDVFVVGTERGRAFVNTRKDFQKDFVKYCVEEEEKAAEMHKMKSTTQANRMSVDAVEIETLRKTVEDYFCFCYGKALGKSTVVPVPYEKMLRDQSAVVVQGLPEGVAFKHPENYDLATLKWILENKAGISFIIKRPFLEPKKHVGGRVMVTDADRSILSPGGSCGPIKVKTEPTEDSGISLEMAAVTVKEESEDPDYYQYNIQAGPSETDDVDEKQPLSKPLQGSHHSSEGNEGTEMEVPAEDSTQHVPSETSEDPEVEVTIEDDDYSPPSKRPKANELPQPPVPEPANAGKRKVREFNFEKWNARITDLRKQVEELFERKYAQAIKAKGPVTIPYPLFQSHVEDLYVEGLPEGIPFRRPSTYGIPRLERILLAKERIRFVIKKHELLNSTREDLQLDKPASGVKEEWYARITKLRKMVDQLFCKKFAEALGSTEAKAVPYQKFEAHPNDLYVEGLPENIPFRSPSWYGIPRLEKIIQVGNRIKFVIKRPELLTHSTTEVTQPRTNTPVKEDWNVRITKLRKQVEEIFNLKFAQALGLTEAVKVPYPVFESNPEFLYVEGLPEGIPFRSPTWFGIPRLERIVRGSNKIKFVVKKPELVISYLPPGMASKINTKALQSPKRPRSPGSNSKVPEIEVTVEGPNNNNPQTSAVRTPTQTNGSNVPFKPRGREFSFEAWNAKITDLKQKVENLFNEKCGEALGLKQAVKVPFALFESFPEDFYVEGLPEGVPFRRPSTFGIPRLEKILRNKAKIKFIIKKPEMFETAIKESTSSKSPPRKINSSPNVNTTASGVEDLNIIQVTIPDDDNERLSKVEKARQLREQVNDLFSRKFGEAIGMGFPVKVPYRKITINPGCVVVDGMPPGVSFKAPSYLEISSMRRILDSAEFIKFTVIRPFPGLVINNQLVDQSESEGPVIQESAEPSQLEVPATEEIKETDGSSQIKQEPDPTW.

Position 2 is an N-acetylalanine (Ala2). A Phosphoserine modification is found at Ser19. Residues Lys35, Lys86, Lys92, and Lys94 each participate in a glycyl lysine isopeptide (Lys-Gly) (interchain with G-Cter in SUMO2) cross-link. Ser103 is subject to Phosphoserine. The GTF2I-like 1 repeat unit spans residues 103-197 (SVDAVEIETL…FLEPKKHVGG (95 aa)). An N6-acetyllysine; alternate modification is found at Lys130. Lys130 is covalently cross-linked (Glycyl lysine isopeptide (Lys-Gly) (interchain with G-Cter in SUMO2); alternate). Glycyl lysine isopeptide (Lys-Gly) (interchain with G-Cter in SUMO2) cross-links involve residues Lys140 and Lys185. Phosphoserine occurs at positions 207, 210, and 214. Residue Lys219 forms a Glycyl lysine isopeptide (Lys-Gly) (interchain with G-Cter in SUMO2) linkage. Residue Lys221 forms a Glycyl lysine isopeptide (Lys-Gly) (interchain with G-Cter in SUMO2); alternate linkage. Lys221 participates in a covalent cross-link: Glycyl lysine isopeptide (Lys-Gly) (interchain with G-Cter in SUMO1); alternate. The interval 241–342 (EESEDPDYYQ…PPVPEPANAG (102 aa)) is disordered. Tyr248 is modified (phosphotyrosine; by BTK). Phosphoserine is present on residues His278 and His298. Residues 303 to 318 (TSEDPEVEVTIEDDDY) are compositionally biased toward acidic residues. Residues 320–327 (PPSKRPKA) carry the Nuclear localization signal motif. Glycyl lysine isopeptide (Lys-Gly) (interchain with G-Cter in SUMO2) cross-links involve residues Lys326 and Lys343. A GTF2I-like 2 repeat occupies 352 to 446 (EKWNARITDL…ELLNSTREDL (95 aa)). Residue Lys353 is modified to N6-acetyllysine; alternate. Lys353 is covalently cross-linked (Glycyl lysine isopeptide (Lys-Gly) (interchain with G-Cter in SUMO2); alternate). A Glycyl lysine isopeptide (Lys-Gly) (interchain with G-Cter in SUMO2) cross-link involves residue Lys380. Tyr398 is modified (phosphotyrosine; by BTK). Ser412 carries the post-translational modification Phosphoserine; by PKG/PRKG1. A Glycyl lysine isopeptide (Lys-Gly) (interchain with G-Cter in SUMO2) cross-link involves residue Lys435. Lys450 carries the N6-acetyllysine; alternate modification. Residue Lys450 forms a Glycyl lysine isopeptide (Lys-Gly) (interchain with G-Cter in SUMO2); alternate linkage. Residues Lys456, Lys488, and Lys494 each participate in a glycyl lysine isopeptide (Lys-Gly) (interchain with G-Cter in SUMO2) cross-link. A GTF2I-like 3 repeat occupies 457 to 551 (EEWYARITKL…ELLTHSTTEV (95 aa)). Tyr503 bears the Phosphotyrosine; by BTK mark. Ser517 carries the phosphoserine modification. A Glycyl lysine isopeptide (Lys-Gly) (interchain with G-Cter in SUMO2) cross-link involves residue Lys526. Thr556 and Thr558 each carry phosphothreonine. Lys561 is covalently cross-linked (Glycyl lysine isopeptide (Lys-Gly) (interchain with G-Cter in SUMO2)). Residues 562–656 (EDWNVRITKL…ELVISYLPPG (95 aa)) form a GTF2I-like 4 repeat. Residues Lys660 and Lys664 each participate in a glycyl lysine isopeptide (Lys-Gly) (interchain with G-Cter in SUMO2) cross-link. 2 disordered regions span residues 662-681 (NTKA…NSKV) and 687-714 (TVEG…NVPF). Ser668 is modified (phosphoserine). A Glycyl lysine isopeptide (Lys-Gly) (interchain with G-Cter in SUMO2) cross-link involves residue Lys670. Ser674 is modified (phosphoserine). Lys680 participates in a covalent cross-link: Glycyl lysine isopeptide (Lys-Gly) (interchain with G-Cter in SUMO2). Over residues 690 to 711 (GPNNNNPQTSAVRTPTQTNGSN) the composition is skewed to polar residues. The residue at position 715 (Lys715) is an N6-acetyllysine; alternate. Lys715 participates in a covalent cross-link: Glycyl lysine isopeptide (Lys-Gly) (interchain with G-Cter in SUMO2); alternate. Ser722 carries the post-translational modification Phosphoserine. The GTF2I-like 5 repeat unit spans residues 724–818 (EAWNAKITDL…EMFETAIKES (95 aa)). Residue Ser784 is modified to Phosphoserine; by PKG/PRKG1. Lys816 participates in a covalent cross-link: Glycyl lysine isopeptide (Lys-Gly) (interchain with G-Cter in SUMO2). Residues 816-836 (KESTSSKSPPRKINSSPNVNT) form a disordered region. At Ser823 the chain carries Phosphoserine. Glycyl lysine isopeptide (Lys-Gly) (interchain with G-Cter in SUMO2) cross-links involve residues Lys827, Lys861, Lys864, Lys879, and Lys891. Residues 859 to 953 (LSKVEKARQL…FPGLVINNQL (95 aa)) form a GTF2I-like 6 repeat. The segment at 958–998 (ESEGPVIQESAEPSQLEVPATEEIKETDGSSQIKQEPDPTW) is disordered. A Glycyl lysine isopeptide (Lys-Gly) (interchain with G-Cter in SUMO2); alternate cross-link involves residue Lys991. A Glycyl lysine isopeptide (Lys-Gly) (interchain with G-Cter in SUMO1); alternate cross-link involves residue Lys991.

The protein belongs to the TFII-I family. Homodimer (Potential). Interacts with SRF and PHOX1. Binds a pyrimidine-rich initiator (Inr) and a recognition site (E-box) for upstream stimulatory factor 1 (USF1). Associates with the PH domain of Bruton's tyrosine kinase (BTK). May be a component of a BHC histone deacetylase complex that contains HDAC1, HDAC2, HMG20B/BRAF35, KDM1A, RCOR1/CoREST, PHF21A/BHC80, ZMYM2, ZNF217, ZMYM3, GSE1 and GTF2I. Interacts with BTK and ARID3A. Interacts with isoform beta of PRKG1. Interacts with GPR50 (C-TERMINAL DOMAIN). In terms of processing, transiently phosphorylated on tyrosine residues by BTK in response to B-cell receptor stimulation. Phosphorylation on Tyr-248 and Tyr-398, and perhaps, on Tyr-503 contributes to BTK-mediated transcriptional activation. Post-translationally, sumoylated. Ubiquitous. Isoform 1 is strongly expressed in fetal brain, weakly in adult brain, muscle, and lymphoblasts and is almost undetectable in other adult tissues, while the other isoforms are equally expressed in all adult tissues.

The protein localises to the cytoplasm. Its subcellular location is the nucleus. Functionally, interacts with the basal transcription machinery by coordinating the formation of a multiprotein complex at the C-FOS promoter, and linking specific signal responsive activator complexes. Promotes the formation of stable high-order complexes of SRF and PHOX1 and interacts cooperatively with PHOX1 to promote serum-inducible transcription of a reporter gene deriven by the C-FOS serum response element (SRE). Acts as a coregulator for USF1 by binding independently two promoter elements, a pyrimidine-rich initiator (Inr) and an upstream E-box. Required for the formation of functional ARID3A DNA-binding complexes and for activation of immunoglobulin heavy-chain transcription upon B-lymphocyte activation. The protein is General transcription factor II-I (GTF2I) of Homo sapiens (Human).